The following is a 275-amino-acid chain: Glutamate racemase (275 aa).

Residues 10–11 (DS) and 42–43 (YG) contribute to the substrate site. Catalysis depends on Cys74, which acts as the Proton donor/acceptor. 75–76 (NT) provides a ligand contact to substrate. Cys189 functions as the Proton donor/acceptor in the catalytic mechanism. 190 to 191 (TH) lines the substrate pocket.

Belongs to the aspartate/glutamate racemases family.

It catalyses the reaction L-glutamate = D-glutamate. Its pathway is cell wall biogenesis; peptidoglycan biosynthesis. In terms of biological role, provides the (R)-glutamate required for cell wall biosynthesis. The protein is Glutamate racemase of Bartonella tribocorum (strain CIP 105476 / IBS 506).